We begin with the raw amino-acid sequence, 322 residues long: Protein mono-ADP-ribosyltransferase PARP16 (322 aa).

Residues 1-287 (MQPSGWAAAR…RASSQLSWFS (287 aa)) lie on the Cytoplasmic side of the membrane. The PARP alpha-helical domain occupies 5-91 (GWAAAREAAG…AWDLVSWILS (87 aa)). Asp37 is subject to ADP-ribosyl aspartic acid. Glu70 carries the post-translational modification ADP-ribosyl glutamic acid. The PARP catalytic domain maps to 94–279 (VLTIHSAGKA…VYSQKPPKRA (186 aa)). Residues Lys110 and Lys137 each carry the N6-(ADP-ribosyl)lysine modification. The NAD(+) site is built by His152, Tyr182, and Tyr254. A helical membrane pass occupies residues 288–308 (SHWFTVMISLYLLLLLIVSVI). Residues 309–322 (NSSAFQHFWNRAKR) are Lumenal-facing.

The protein belongs to the ARTD/PARP family. As to quaternary structure, interacts with KPNB1. Post-translationally, auto-mono-ADP-ribosylated.

Its subcellular location is the endoplasmic reticulum membrane. It catalyses the reaction L-aspartyl-[protein] + NAD(+) = 4-O-(ADP-D-ribosyl)-L-aspartyl-[protein] + nicotinamide. The enzyme catalyses L-glutamyl-[protein] + NAD(+) = 5-O-(ADP-D-ribosyl)-L-glutamyl-[protein] + nicotinamide. It carries out the reaction L-lysyl-[protein] + NAD(+) = N(6)-(ADP-D-ribosyl)-L-lysyl-[protein] + nicotinamide + H(+). Its activity is regulated as follows. In absence of activation signal, PARP16 is autoinhibited by the PARP alpha-helical domain (also named HD region), which prevents effective NAD(+)-binding. Activity is highly stimulated by signals, which unfold the PARP alpha-helical domain, relieving autoinhibition. Intracellular mono-ADP-ribosyltransferase that plays a role in different processes, such as protein translation and unfolded protein response (UPR), through the mono-ADP-ribosylation of proteins involved in those processes. Acts as an inhibitor of protein translation by catalyzing mono-ADP-ribosylation of ribosomal subunits, such as RPL14 and RPS6, thereby inhibiting polysome assembly and mRNA loading. Mono-ADP-ribosylation of ribosomal subunits is promoted by NMNAT2. Involved in the unfolded protein response (UPR) by ADP-ribosylating and activating EIF2AK3 and ERN1, two important UPR effectors. May also mediate mono-ADP-ribosylation of karyopherin KPNB1 a nuclear import factor. May not modify proteins on arginine or cysteine residues compared to other mono-ADP-ribosyltransferases. This is Protein mono-ADP-ribosyltransferase PARP16 from Homo sapiens (Human).